We begin with the raw amino-acid sequence, 220 residues long: Protein-methionine-sulfoxide reductase heme-binding subunit MsrQ (220 aa).

The next 5 helical transmembrane spans lie at 20 to 40 (IWLLYAVGFVPAVWTFYLGAS), 52 to 72 (EHTLGLWALRFLILTLMVTPI), 86 to 106 (ALGLLAFYYALMHFATYMVLD), 122 to 142 (PFITIGMISLVLLVPLALTSN), and 159 to 179 (LVYVAIAGGAIHFIMSVKSWP).

The protein belongs to the MsrQ family. As to quaternary structure, heterodimer of a catalytic subunit (MsrP) and a heme-binding subunit (MsrQ). FMN is required as a cofactor. The cofactor is heme b.

It is found in the cell inner membrane. Part of the MsrPQ system that repairs oxidized periplasmic proteins containing methionine sulfoxide residues (Met-O), using respiratory chain electrons. Thus protects these proteins from oxidative-stress damage caused by reactive species of oxygen and chlorine generated by the host defense mechanisms. MsrPQ is essential for the maintenance of envelope integrity under bleach stress, rescuing a wide series of structurally unrelated periplasmic proteins from methionine oxidation. MsrQ provides electrons for reduction to the reductase catalytic subunit MsrP, using the quinone pool of the respiratory chain. In Brucella anthropi (strain ATCC 49188 / DSM 6882 / CCUG 24695 / JCM 21032 / LMG 3331 / NBRC 15819 / NCTC 12168 / Alc 37) (Ochrobactrum anthropi), this protein is Protein-methionine-sulfoxide reductase heme-binding subunit MsrQ.